The primary structure comprises 196 residues: FMN-dependent NADH:quinone oxidoreductase (196 aa).

FMN contacts are provided by residues Ser10, 16–18, 93–96, and 137–140; these read SQS, MYNF, and TRGG.

It belongs to the azoreductase type 1 family. As to quaternary structure, homodimer. It depends on FMN as a cofactor.

The catalysed reaction is 2 a quinone + NADH + H(+) = 2 a 1,4-benzosemiquinone + NAD(+). It catalyses the reaction N,N-dimethyl-1,4-phenylenediamine + anthranilate + 2 NAD(+) = 2-(4-dimethylaminophenyl)diazenylbenzoate + 2 NADH + 2 H(+). In terms of biological role, quinone reductase that provides resistance to thiol-specific stress caused by electrophilic quinones. Its function is as follows. Also exhibits azoreductase activity. Catalyzes the reductive cleavage of the azo bond in aromatic azo compounds to the corresponding amines. This Shewanella amazonensis (strain ATCC BAA-1098 / SB2B) protein is FMN-dependent NADH:quinone oxidoreductase.